A 233-amino-acid chain; its full sequence is 2,3,4,5-tetrahydropyridine-2,6-dicarboxylate N-acetyltransferase (233 aa).

Belongs to the transferase hexapeptide repeat family. DapH subfamily.

It carries out the reaction (S)-2,3,4,5-tetrahydrodipicolinate + acetyl-CoA + H2O = L-2-acetamido-6-oxoheptanedioate + CoA. Its pathway is amino-acid biosynthesis; L-lysine biosynthesis via DAP pathway; LL-2,6-diaminopimelate from (S)-tetrahydrodipicolinate (acetylase route): step 1/3. Catalyzes the transfer of an acetyl group from acetyl-CoA to tetrahydrodipicolinate. In Thermotoga sp. (strain RQ2), this protein is 2,3,4,5-tetrahydropyridine-2,6-dicarboxylate N-acetyltransferase.